Here is a 283-residue protein sequence, read N- to C-terminus: Acetylglutamate kinase (283 aa).

Substrate contacts are provided by residues 64–65 (GG), Arg-86, and Asn-181.

Belongs to the acetylglutamate kinase family. ArgB subfamily.

It is found in the cytoplasm. It catalyses the reaction N-acetyl-L-glutamate + ATP = N-acetyl-L-glutamyl 5-phosphate + ADP. Its pathway is amino-acid biosynthesis; L-arginine biosynthesis; N(2)-acetyl-L-ornithine from L-glutamate: step 2/4. Catalyzes the ATP-dependent phosphorylation of N-acetyl-L-glutamate. The chain is Acetylglutamate kinase from Sulfurovum sp. (strain NBC37-1).